Consider the following 410-residue polypeptide: LanC-like protein GCR2 (410 aa).

Residues Cys283, Cys328, and His329 each contribute to the Zn(2+) site.

The protein belongs to the LanC-like protein family. As to quaternary structure, may interact (via C-terminus) with GPA1.

May play a role in abscisic acid (ABA) signaling. This is LanC-like protein GCR2 (GCR2) from Arabidopsis thaliana (Mouse-ear cress).